Here is a 422-residue protein sequence, read N- to C-terminus: G2/mitotic-specific cyclin-A (422 aa).

The interval 1–29 is disordered; it reads MSQPFALHHDGENQMQRRGKMNTRSNGLS.

Belongs to the cyclin family. Cyclin AB subfamily.

Essential for the control of the cell cycle at the G2/M (mitosis) transition. Interacts with the CDC2 and CDK2 protein kinases to form MPF. G2/M cyclins accumulate steadily during G2 and are abruptly destroyed at mitosis. The protein is G2/mitotic-specific cyclin-A of Spisula solidissima (Atlantic surf-clam).